Here is a 185-residue protein sequence, read N- to C-terminus: Ribosome-recycling factor (185 aa).

It belongs to the RRF family.

It is found in the cytoplasm. Functionally, responsible for the release of ribosomes from messenger RNA at the termination of protein biosynthesis. May increase the efficiency of translation by recycling ribosomes from one round of translation to another. The sequence is that of Ribosome-recycling factor from Neisseria meningitidis serogroup A / serotype 4A (strain DSM 15465 / Z2491).